The primary structure comprises 181 residues: Probable mitochondrial import inner membrane translocase subunit tim-17B.1 (181 aa).

3 helical membrane passes run 17–37 (IGSA…FGGY), 61–81 (GVQF…LVAI), and 109–129 (VMAG…GVGL). The interval 137 to 181 (AMMDPTQPPPEALDDPRSLGQKSQAEPGLDQTRPFGIPTGLPNLS) is disordered.

This sequence belongs to the Tim17/Tim22/Tim23 family.

Its subcellular location is the mitochondrion inner membrane. Its function is as follows. Essential component of the TIM23 complex, a complex that mediates the translocation of transit peptide-containing proteins across the mitochondrial inner membrane. This chain is Probable mitochondrial import inner membrane translocase subunit tim-17B.1, found in Caenorhabditis elegans.